The primary structure comprises 155 residues: Large ribosomal subunit protein uL13 (155 aa).

It belongs to the universal ribosomal protein uL13 family. Part of the 50S ribosomal subunit.

Its function is as follows. This protein is one of the early assembly proteins of the 50S ribosomal subunit, although it is not seen to bind rRNA by itself. It is important during the early stages of 50S assembly. The protein is Large ribosomal subunit protein uL13 of Rickettsia bellii (strain OSU 85-389).